The primary structure comprises 461 residues: D-phenylhydantoinase (461 aa).

A divalent metal cation contacts are provided by histidine 59, histidine 61, and lysine 151. The residue at position 151 (lysine 151) is an N6-carboxylysine. Tyrosine 156 contacts substrate. Histidine 182 and histidine 239 together coordinate a divalent metal cation. Position 286 (serine 286) interacts with substrate. Aspartate 313 contributes to the a divalent metal cation binding site. Asparagine 335 contributes to the substrate binding site.

The protein belongs to the metallo-dependent hydrolases superfamily. Hydantoinase/dihydropyrimidinase family. In terms of assembly, homotetramer. The cofactor is a divalent metal cation. In terms of processing, carboxylation allows a single lysine to coordinate two divalent metal cations.

The catalysed reaction is D-5-phenylhydantoin + H2O = N-carbamoyl-D-phenylglycine + H(+). Its function is as follows. Catalyzes the stereospecific hydrolysis of the cyclic amide bond of D-hydantoin derivatives with an aromatic side chains at the 5'-position. Has no activity on dihydropyrimidines. The physiological function is unknown. The protein is D-phenylhydantoinase of Escherichia coli (strain SE11).